Reading from the N-terminus, the 497-residue chain is 3-octaprenyl-4-hydroxybenzoate carboxy-lyase (497 aa).

Asparagine 175 contributes to the Mn(2+) binding site. Prenylated FMN is bound by residues 178–180 (IYR), 192–194 (RWL), and 197–198 (RG). Glutamate 241 provides a ligand contact to Mn(2+). Catalysis depends on aspartate 290, which acts as the Proton donor.

This sequence belongs to the UbiD family. As to quaternary structure, homohexamer. It depends on prenylated FMN as a cofactor. Requires Mn(2+) as cofactor.

The protein resides in the cell membrane. The catalysed reaction is a 4-hydroxy-3-(all-trans-polyprenyl)benzoate + H(+) = a 2-(all-trans-polyprenyl)phenol + CO2. It functions in the pathway cofactor biosynthesis; ubiquinone biosynthesis. Its function is as follows. Catalyzes the decarboxylation of 3-octaprenyl-4-hydroxy benzoate to 2-octaprenylphenol, an intermediate step in ubiquinone biosynthesis. The chain is 3-octaprenyl-4-hydroxybenzoate carboxy-lyase from Shigella flexneri.